Reading from the N-terminus, the 311-residue chain is Replication initiation protein (311 aa).

This sequence belongs to the plasmid replication initiation factor family.

Its function is as follows. This protein is probably a specific topoisomerase involved in initiating replication. This protein is specifically required and may be rate-limiting for replication of the plasmid in vivo. The protein is Replication initiation protein (repD) of Staphylococcus aureus.